The following is a 189-amino-acid chain: Lumazine protein (189 aa).

Lumazine-binding repeat units follow at residues 1-96 and 97-189; these read MFKG…LGKG and ALTG…SNEW.

The cofactor is 6,7-dimethyl-8-(1-D-ribityl)lumazine.

Antenna protein that modulates the color of the bioluminescence emission of the luciferase. In the presence of LumP, luciferase emission is shifted to higher energy values (shorter wavelength). The chain is Lumazine protein (luxL) from Photobacterium phosphoreum.